The sequence spans 45 residues: Omega-hexatoxin-Hv2a (45 aa).

3 cysteine pairs are disulfide-bonded: C4/C18, C11/C24, and C17/C29.

The protein belongs to the neurotoxin 15 family. 02 (omega-actx) subfamily. Expressed by the venom gland.

Its subcellular location is the secreted. Potent inhibitor of insect (bee brain), but not mammalian (rat trigeminal neurons), voltage-gated calcium channels (Cav). In vivo, injection into lone star ticks (Amblyomma americanum) induces curling of all eight legs into closed loops, followed by death. The sequence is that of Omega-hexatoxin-Hv2a from Hadronyche versuta (Blue mountains funnel-web spider).